We begin with the raw amino-acid sequence, 425 residues long: Phosphoribosylamine--glycine ligase (425 aa).

The ATP-grasp domain maps to 107–312 (KDLCARYNIP…LLVLLNAAVD (206 aa)). Residue 133–193 (VDQTGAPIVI…EEFMTGEEAS (61 aa)) coordinates ATP. The segment at 214-233 (RVGDGDVGPNTGGMGAYSPA) is disordered. Positions 282 and 284 each coordinate Mg(2+).

Belongs to the GARS family. The cofactor is Mg(2+). Requires Mn(2+) as cofactor.

It catalyses the reaction 5-phospho-beta-D-ribosylamine + glycine + ATP = N(1)-(5-phospho-beta-D-ribosyl)glycinamide + ADP + phosphate + H(+). Its pathway is purine metabolism; IMP biosynthesis via de novo pathway; N(1)-(5-phospho-D-ribosyl)glycinamide from 5-phospho-alpha-D-ribose 1-diphosphate: step 2/2. The sequence is that of Phosphoribosylamine--glycine ligase from Mesorhizobium japonicum (strain LMG 29417 / CECT 9101 / MAFF 303099) (Mesorhizobium loti (strain MAFF 303099)).